A 501-amino-acid polypeptide reads, in one-letter code: ATP synthase subunit alpha (501 aa).

Residue 169-176 coordinates ATP; it reads GDRQTGKT.

The protein belongs to the ATPase alpha/beta chains family. F-type ATPases have 2 components, CF(1) - the catalytic core - and CF(0) - the membrane proton channel. CF(1) has five subunits: alpha(3), beta(3), gamma(1), delta(1), epsilon(1). CF(0) has three main subunits: a(1), b(2) and c(9-12). The alpha and beta chains form an alternating ring which encloses part of the gamma chain. CF(1) is attached to CF(0) by a central stalk formed by the gamma and epsilon chains, while a peripheral stalk is formed by the delta and b chains.

Its subcellular location is the cell membrane. It carries out the reaction ATP + H2O + 4 H(+)(in) = ADP + phosphate + 5 H(+)(out). In terms of biological role, produces ATP from ADP in the presence of a proton gradient across the membrane. The alpha chain is a regulatory subunit. The sequence is that of ATP synthase subunit alpha from Streptococcus pneumoniae serotype 2 (strain D39 / NCTC 7466).